Consider the following 1033-residue polypeptide: Phospholipid-transporting ATPase neo1 (1033 aa).

Helical transmembrane passes span 133 to 153, 274 to 294, 317 to 337, and 344 to 364; these read LKIG…LITL, TLWA…VYTG, INFY…GLTF, and DWYI…PINL. Asp408 functions as the 4-aspartylphosphate intermediate in the catalytic mechanism. 15 residues coordinate ATP: Asp408, Lys409, Thr410, Glu491, Phe528, Ser530, Lys533, Lys551, Arg580, Thr581, Thr662, Gly663, Asp664, Arg744, and Lys750. Asp408 lines the Mg(2+) pocket. Thr410 is a Mg(2+) binding site. The next 6 helical transmembrane spans lie at 768 to 788, 843 to 863, 913 to 933, 939 to 959, 965 to 985, and 992 to 1012; these read IGDG…IGIV, VVYS…LLLV, VLIS…LIGF, MLAV…ALQI, TIVM…PFLT, and FLLG…SLLP. Asp770 contributes to the Mg(2+) binding site. Asn773 and Asp774 together coordinate ATP. Asp774 provides a ligand contact to Mg(2+).

This sequence belongs to the cation transport ATPase (P-type) (TC 3.A.3) family. Type IV subfamily. In terms of assembly, functions without a CDC50/LEM3 family accessory subunit. Requires Mg(2+) as cofactor.

The protein resides in the endosome membrane. It is found in the golgi apparatus membrane. The enzyme catalyses ATP + H2O + phospholipidSide 1 = ADP + phosphate + phospholipidSide 2.. The catalysed reaction is a 1,2-diacyl-sn-glycero-3-phospho-L-serine(out) + ATP + H2O = a 1,2-diacyl-sn-glycero-3-phospho-L-serine(in) + ADP + phosphate + H(+). It carries out the reaction a 1,2-diacyl-sn-glycero-3-phosphoethanolamine(out) + ATP + H2O = a 1,2-diacyl-sn-glycero-3-phosphoethanolamine(in) + ADP + phosphate + H(+). Flippase that catalyzes the hydrolysis of ATP coupled to the transport of lysophosphatidylserine, phosphatidylethanolamine, and phosphatidylserine from the lumenal to the cytosolic leaflet of the Golgi apparatus membrane and ensures the maintenance of asymmetric distribution of phospholipids. The polypeptide is Phospholipid-transporting ATPase neo1 (Schizosaccharomyces pombe (strain 972 / ATCC 24843) (Fission yeast)).